The primary structure comprises 130 residues: Capsid protein (130 aa).

Residues 31-104 are viral RNA-binding; it reads EWLSNNSRSQ…FAATDDVTVI (74 aa).

The protein belongs to the Leviviricetes capsid protein family. In terms of assembly, homodimer. The capsid proteins form dimers that assemble by group of 5. Twelve such pentamers are linked together with free dimers. The homodimers binds to the viral RNA via an operator hairpin, but also to many other RNA sequences in the viral genome; this interaction probably shifts the virus from the replicative to the assembly phase and ensures specific encapsidation of the viral genome.

The protein resides in the virion. In terms of biological role, capsid protein self-assembles to form an icosahedral capsid with a T=3 symmetry, about 26 nm in diameter, and consisting of 89 capsid proteins dimers (178 capsid proteins). Involved in viral genome encapsidation through the interaction between a capsid protein dimer and the multiple packaging signals present in the RNA genome. The capsid also contains 1 copy of the A2 maturation protein. Functionally, acts as a translational repressor of viral replicase synthesis late in infection. This latter function is the result of capsid protein interaction with an RNA hairpin which contains the replicase ribosome-binding site. In Escherichia coli (Bacteriophage GA), this protein is Capsid protein.